The sequence spans 186 residues: Large ribosomal subunit protein bL17 (186 aa).

The disordered stretch occupies residues 123–186 (SEADRARRVK…ADEAEGSSED (64 aa)). A compositionally biased stretch (low complexity) spans 139–177 (EAAAAAPQAAVEPEAVEAAPAPDAPEAAPEAEAAAPQPA).

It belongs to the bacterial ribosomal protein bL17 family. As to quaternary structure, part of the 50S ribosomal subunit. Contacts protein L32.

This chain is Large ribosomal subunit protein bL17, found in Mycobacterium avium (strain 104).